The following is an 809-amino-acid chain: Protein PHOX3 (809 aa).

The disordered stretch occupies residues 1-22; sequence MEKQNEEISTDDAETSQSQLVD. TPR repeat units lie at residues 126-159, 164-199, 200-233, 235-265, and 274-311; these read AQGLKEEGNKLFQKRDYDGAMFKYGEAIKILPKD, SHVRANVASCYMQLEPGEFAKAIHECDLALSVTPDH, NKALLKRARCYEALNKLDLALRDVCMVSKLDPKN, MASEIVEKLKRTLESKGLRINNSVIELPPDY, and AALWAKLGKVRVKKTKKSNQVEEKSEGEGEDVEPEKKN. The tract at residues 288-339 is disordered; that stretch reads TKKSNQVEEKSEGEGEDVEPEKKNNVLAEKGKEKIKMKVKGKQSDKRSDTSK. Serine 298 carries the phosphoserine modification. Over residues 307-339 the composition is skewed to basic and acidic residues; the sequence is PEKKNNVLAEKGKEKIKMKVKGKQSDKRSDTSK. Positions 359–438 constitute a PB1 domain; the sequence is NKDVKFVYSD…GTMRFYVVEV (80 aa). 3 TPR repeats span residues 508–541, 563–597, and 615–648; these read SEAMEEVVTSDAAQGPFDRAAQQFQEVAARSLLN, ESVSEQVKTAYECAKKEHANAKEKYEEAMKIKPEC, and SWYYVLVSHLDLKTWPYADVVQFYQSAESNIKKS. Residues 656–686 form a disordered region; sequence ETGKESEPSQAGKTDCLTHEKDLGSSTQNNP. One copy of the TPR 9 repeat lies at 709–741; that stretch reads SIMEYKLDQPFWRESLEAAMEKFELAGTCKDDV.

In terms of biological role, carboxylate clamp type tetratricopeptide repeat protein that may act as a potential Hsp90/Hsp70 co-chaperone. Contributes to polar growth of root hairs. This is Protein PHOX3 from Arabidopsis thaliana (Mouse-ear cress).